The following is an 85-amino-acid chain: Large ribosomal subunit protein bL27 (85 aa).

This sequence belongs to the bacterial ribosomal protein bL27 family.

This is Large ribosomal subunit protein bL27 from Pseudomonas fluorescens (strain SBW25).